Reading from the N-terminus, the 102-residue chain is Small ribosomal subunit protein uS10 (102 aa).

The protein belongs to the universal ribosomal protein uS10 family. In terms of assembly, part of the 30S ribosomal subunit.

In terms of biological role, involved in the binding of tRNA to the ribosomes. The sequence is that of Small ribosomal subunit protein uS10 from Fervidobacterium nodosum (strain ATCC 35602 / DSM 5306 / Rt17-B1).